A 378-amino-acid polypeptide reads, in one-letter code: tRNA N(3)-cytidine methyltransferase METTL2B (378 aa).

Residue Ala2 is modified to N-acetylalanine. Ser4 is subject to Phosphoserine. Trp78 and Tyr82 together coordinate S-adenosyl-L-methionine. Position 154 is a phosphothreonine (Thr154). S-adenosyl-L-methionine-binding residues include Gly188, Asp213, Asp239, Leu240, and Ile260.

It belongs to the methyltransferase superfamily. METL family. As to quaternary structure, monomer. Interacts with DALRD3.

It localises to the cytoplasm. The catalysed reaction is cytidine(32) in tRNA(Thr) + S-adenosyl-L-methionine = N(3)-methylcytidine(32) in tRNA(Thr) + S-adenosyl-L-homocysteine + H(+). It catalyses the reaction cytidine(32) in tRNA(Arg)(CCU) + S-adenosyl-L-methionine = N(3)-methylcytidine(32) in tRNA(Arg)(CCU) + S-adenosyl-L-homocysteine + H(+). Functionally, S-adenosyl-L-methionine-dependent methyltransferase that mediates N(3)-methylcytidine modification of residue 32 of the tRNA anticodon loop of tRNA(Thr)(UGU) and tRNA(Arg)(CCU). The sequence is that of tRNA N(3)-cytidine methyltransferase METTL2B from Homo sapiens (Human).